The sequence spans 176 residues: Large ribosomal subunit protein uL22z (176 aa).

The segment covering 154–163 has biased composition (basic and acidic residues); sequence KEEPVKKEPE. The tract at residues 154–176 is disordered; sequence KEEPVKKEPETQLAAKSKKGASS.

The protein belongs to the universal ribosomal protein uL22 family.

This is Large ribosomal subunit protein uL22z (RPL17A) from Arabidopsis thaliana (Mouse-ear cress).